The sequence spans 158 residues: Transcriptional repressor NrdR (158 aa).

A zinc finger lies at 3-34 (CPYCQSEDTQVKDSRPAEDGAVIRRRRVCSVC). Residues 49 to 139 (LMVVKKSGRR…VYRNFSKAVD (91 aa)) form the ATP-cone domain.

This sequence belongs to the NrdR family. Zn(2+) serves as cofactor.

Its function is as follows. Negatively regulates transcription of bacterial ribonucleotide reductase nrd genes and operons by binding to NrdR-boxes. The chain is Transcriptional repressor NrdR from Brucella abortus (strain S19).